Here is a 427-residue protein sequence, read N- to C-terminus: Inward rectifier potassium channel 2 (427 aa).

Residues 1–81 lie on the Cytoplasmic side of the membrane; the sequence is MGSVRTNRYS…IFTTCVDIRW (81 aa). Residue Cys76 is modified to S-nitrosocysteine. The helical transmembrane segment at 82–106 threads the bilayer; that stretch reads RWMLVIFCLAFVLSWLFFGCVFWLI. The Extracellular portion of the chain corresponds to 107 to 128; it reads ALLHGDLDASKESKACVSEVNS. An intramembrane region (helical; Pore-forming) is located at residues 129-140; it reads FTAAFLFSIETQ. The segment at residues 141–147 is an intramembrane region (pore-forming); that stretch reads TTIGYGF. The Selectivity filter motif lies at 142 to 147; that stretch reads TIGYGF. At 148 to 156 the chain is on the extracellular side; sequence RCVTDECPI. The chain crosses the membrane as a helical span at residues 157 to 178; the sequence is AVFMVVFQSIVGCIIDAFIIGA. Topologically, residues 179 to 427 are cytoplasmic; that stretch reads VMAKMAKPKK…PRPLRRESEI (249 aa). A polyphosphoinositide (PIP2)-binding region spans residues 181–208; sequence AKMAKPKKRNETLVFSHNAVIAMRDGKL. A disordered region spans residues 383–427; sequence TSKEEEDSENGVPESTSTDSPPGIDLHNQASVPLEPRPLRRESEI. Positions 425–427 match the PDZ-binding motif; sequence SEI.

It belongs to the inward rectifier-type potassium channel (TC 1.A.2.1) family. KCNJ2 subfamily. Homotetramer. Homomultimeric and heteromultimeric association with KCNJ4/Kir2.3. Can form heteromeric channels with Kir2.6/KCNJ18. Associates, via its PDZ-recognition domain, with a complex containing LIN7A, LIN7B, LIN7C, DLG1, CASK and APBA1. S-nitrosylation increases the open probability and inward rectifying currents. Prominently expressed in the central nervous system. Also found in other excitable tissues such as heart and skeletal muscle.

It localises to the cell membrane. The protein resides in the sarcolemma. The protein localises to the T-tubule. The enzyme catalyses K(+)(in) = K(+)(out). With respect to regulation, activated by phosphatidylinositol 4,5 biphosphate (PtdIns(4,5)P2). Its function is as follows. Inward rectifier potassium channels are characterized by a greater tendency to allow potassium to flow into the cell rather than out of it. Their voltage dependence is regulated by the concentration of extracellular potassium; as external potassium is raised, the voltage range of the channel opening shifts to more positive voltages. The inward rectification is mainly due to the blockage of outward current by internal magnesium. Can be blocked by extracellular barium and cesium. Probably participates in establishing action potential waveform and excitability of neuronal and muscle tissues. This is Inward rectifier potassium channel 2 (Kcnj2) from Rattus norvegicus (Rat).